A 156-amino-acid chain; its full sequence is Small ribosomal subunit protein uS7 (156 aa).

The protein belongs to the universal ribosomal protein uS7 family. In terms of assembly, part of the 30S ribosomal subunit. Contacts proteins S9 and S11.

In terms of biological role, one of the primary rRNA binding proteins, it binds directly to 16S rRNA where it nucleates assembly of the head domain of the 30S subunit. Is located at the subunit interface close to the decoding center, probably blocks exit of the E-site tRNA. This chain is Small ribosomal subunit protein uS7, found in Streptococcus suis (strain 98HAH33).